Consider the following 82-residue polypeptide: Small ribosomal subunit protein bS18 (82 aa).

Positions 1-21 (MKRNNSKKVRVEPTRRPKKNP) are disordered.

The protein belongs to the bacterial ribosomal protein bS18 family. As to quaternary structure, part of the 30S ribosomal subunit. Forms a tight heterodimer with protein bS6.

Binds as a heterodimer with protein bS6 to the central domain of the 16S rRNA, where it helps stabilize the platform of the 30S subunit. The chain is Small ribosomal subunit protein bS18 from Corynebacterium kroppenstedtii (strain DSM 44385 / JCM 11950 / CIP 105744 / CCUG 35717).